The chain runs to 244 residues: MSDSSDTTVDGASDGASDGASGADNRAQLVDTALTERQRTILNVIRTSVNDRGYPPSIREIGDAVGLTSTSSVAHQLRTLERKGYLRRDPNRPRAVDVRGADDTVTAAPVTDVAGSDALPEPTFVPVLGRIAAGGPILAEEAVEDVFPLPRELVGQGTLFLLKVVGESMVEAAICDGDWVVVRQQNVADNGDIVAAMIDGEATVKTFKRAGGQIWLMPHNPAFDPIPGNDATVLGKVVTVIRKI.

The tract at residues 1 to 24 is disordered; that stretch reads MSDSSDTTVDGASDGASDGASGAD. Over residues 10 to 24 the composition is skewed to low complexity; it reads DGASDGASDGASGAD. The segment at residues 58–78 is a DNA-binding region (H-T-H motif); it reads IREIGDAVGLTSTSSVAHQLR. Active-site for autocatalytic cleavage activity residues include serine 168 and lysine 205.

The protein belongs to the peptidase S24 family. As to quaternary structure, homodimer.

It carries out the reaction Hydrolysis of Ala-|-Gly bond in repressor LexA.. Represses a number of genes involved in the response to DNA damage (SOS response), including recA and lexA. In the presence of single-stranded DNA, RecA interacts with LexA causing an autocatalytic cleavage which disrupts the DNA-binding part of LexA, leading to derepression of the SOS regulon and eventually DNA repair. The chain is LexA repressor from Mycobacterium ulcerans (strain Agy99).